The chain runs to 96 residues: NADH-ubiquinone oxidoreductase chain 4L (96 aa).

3 consecutive transmembrane segments (helical) span residues 2–22 (IMIL…FCFV), 28–48 (LLSM…MLFI), and 62–82 (MFLT…VSMI).

It belongs to the complex I subunit 4L family.

It localises to the mitochondrion membrane. The catalysed reaction is a ubiquinone + NADH + 5 H(+)(in) = a ubiquinol + NAD(+) + 4 H(+)(out). Core subunit of the mitochondrial membrane respiratory chain NADH dehydrogenase (Complex I) that is believed to belong to the minimal assembly required for catalysis. Complex I functions in the transfer of electrons from NADH to the respiratory chain. The immediate electron acceptor for the enzyme is believed to be ubiquinone. In Drosophila melanogaster (Fruit fly), this protein is NADH-ubiquinone oxidoreductase chain 4L (mt:ND4L).